The sequence spans 144 residues: Small ribosomal subunit protein eS10A (144 aa).

A disordered region spans residues 90-144 (THKRQVRPTAPRAGRPEPRERASADAGYRRAEKKDEGAAPSGFAPSFRGGFGRPQ). Basic and acidic residues predominate over residues 103-126 (GRPEPRERASADAGYRRAEKKDEG).

The protein belongs to the eukaryotic ribosomal protein eS10 family. Component of the small ribosomal subunit (SSU). Mature yeast ribosomes consist of a small (40S) and a large (60S) subunit. The 40S small subunit contains 1 molecule of ribosomal RNA (18S rRNA) and at least 33 different proteins. The large 60S subunit contains 3 rRNA molecules (25S, 5.8S and 5S rRNA) and at least 46 different proteins. eS10 interacts with GCN1 (via middle region); this interaction is direct and promotes GCN2 kinase activity.

It localises to the cytoplasm. Its function is as follows. Component of the ribosome, a large ribonucleoprotein complex responsible for the synthesis of proteins in the cell. The small ribosomal subunit (SSU) binds messenger RNAs (mRNAs) and translates the encoded message by selecting cognate aminoacyl-transfer RNA (tRNA) molecules. The large subunit (LSU) contains the ribosomal catalytic site termed the peptidyl transferase center (PTC), which catalyzes the formation of peptide bonds, thereby polymerizing the amino acids delivered by tRNAs into a polypeptide chain. The nascent polypeptides leave the ribosome through a tunnel in the LSU and interact with protein factors that function in enzymatic processing, targeting, and the membrane insertion of nascent chains at the exit of the ribosomal tunnel. eS10 plays a role as a positive regulator of the GCN2 kinase activity by stimulating GCN1-mediated GCN2 activation. This is Small ribosomal subunit protein eS10A (rps1001) from Schizosaccharomyces pombe (strain 972 / ATCC 24843) (Fission yeast).